The sequence spans 414 residues: Ornithine aminotransferase (414 aa).

An intrachain disulfide couples Cys-154 to Cys-163. At Lys-262 the chain carries N6-(pyridoxal phosphate)lysine.

This sequence belongs to the class-III pyridoxal-phosphate-dependent aminotransferase family. Homodimer. It depends on pyridoxal 5'-phosphate as a cofactor. The disulfide bond between Cys-154 and Cys-163 is reduced by TRX1 which increases OAT catalytic activity.

The protein localises to the cytoplasm. The catalysed reaction is a 2-oxocarboxylate + L-ornithine = L-glutamate 5-semialdehyde + an L-alpha-amino acid. The enzyme catalyses L-ornithine + 2-oxoglutarate = L-glutamate 5-semialdehyde + L-glutamate. The protein operates within amino-acid biosynthesis; L-proline biosynthesis; L-glutamate 5-semialdehyde from L-ornithine: step 1/1. Its activity is regulated as follows. Unlike for mammalian OATs, activity is increased by TRX1-mediated reduction of the disulfide bond between Cys-154 and Cys-163. Binding to TRX1 may also induce conformational changes that facilitate substrate binding. Its function is as follows. Catalyzes the transamination of alpha-ketoglutarate with ornithine or N-acetylornithine and of glutamate-5-semialdehyde with glutamate and alanine. This chain is Ornithine aminotransferase, found in Plasmodium yoelii yoelii.